We begin with the raw amino-acid sequence, 440 residues long: 23S rRNA (uracil(1939)-C(5))-methyltransferase RlmD (440 aa).

The TRAM domain occupies 6–64 (PIHNAQPEQVFIESLDTEGRGIARVEGKVLFVDGALPGERVWARRTQNHKSFDRAELLQ). Residues Cys77, Cys83, Cys86, and Cys164 each contribute to the [4Fe-4S] cluster site. S-adenosyl-L-methionine contacts are provided by Gln273, Phe302, Asn307, Glu323, Asp351, and Asp372. Cys397 acts as the Nucleophile in catalysis.

The protein belongs to the class I-like SAM-binding methyltransferase superfamily. RNA M5U methyltransferase family. RlmD subfamily.

It catalyses the reaction uridine(1939) in 23S rRNA + S-adenosyl-L-methionine = 5-methyluridine(1939) in 23S rRNA + S-adenosyl-L-homocysteine + H(+). Its function is as follows. Catalyzes the formation of 5-methyl-uridine at position 1939 (m5U1939) in 23S rRNA. The protein is 23S rRNA (uracil(1939)-C(5))-methyltransferase RlmD of Acidithiobacillus ferrooxidans (strain ATCC 23270 / DSM 14882 / CIP 104768 / NCIMB 8455) (Ferrobacillus ferrooxidans (strain ATCC 23270)).